The chain runs to 119 residues: Large ribosomal subunit protein uL22 (119 aa).

It belongs to the universal ribosomal protein uL22 family. In terms of assembly, part of the 50S ribosomal subunit.

This protein binds specifically to 23S rRNA; its binding is stimulated by other ribosomal proteins, e.g. L4, L17, and L20. It is important during the early stages of 50S assembly. It makes multiple contacts with different domains of the 23S rRNA in the assembled 50S subunit and ribosome. In terms of biological role, the globular domain of the protein is located near the polypeptide exit tunnel on the outside of the subunit, while an extended beta-hairpin is found that lines the wall of the exit tunnel in the center of the 70S ribosome. This is Large ribosomal subunit protein uL22 from Chlorobium chlorochromatii (strain CaD3).